Consider the following 264-residue polypeptide: Acyl-[acyl-carrier-protein]--UDP-N-acetylglucosamine O-acyltransferase (264 aa).

This sequence belongs to the transferase hexapeptide repeat family. LpxA subfamily. In terms of assembly, homotrimer.

It localises to the cytoplasm. It catalyses the reaction a (3R)-hydroxyacyl-[ACP] + UDP-N-acetyl-alpha-D-glucosamine = a UDP-3-O-[(3R)-3-hydroxyacyl]-N-acetyl-alpha-D-glucosamine + holo-[ACP]. Its pathway is glycolipid biosynthesis; lipid IV(A) biosynthesis; lipid IV(A) from (3R)-3-hydroxytetradecanoyl-[acyl-carrier-protein] and UDP-N-acetyl-alpha-D-glucosamine: step 1/6. In terms of biological role, involved in the biosynthesis of lipid A, a phosphorylated glycolipid that anchors the lipopolysaccharide to the outer membrane of the cell. The polypeptide is Acyl-[acyl-carrier-protein]--UDP-N-acetylglucosamine O-acyltransferase (Chlorobaculum tepidum (strain ATCC 49652 / DSM 12025 / NBRC 103806 / TLS) (Chlorobium tepidum)).